Consider the following 249-residue polypeptide: FMN reductase (NADPH) (249 aa).

This sequence belongs to the flavin oxidoreductase frp family. As to quaternary structure, homodimer.

It catalyses the reaction FMNH2 + NADP(+) = FMN + NADPH + 2 H(+). In terms of biological role, reduces FMNH(2) to FMN, with NADPH as reductant. It also reduces nitroaromatic compounds, quinones and azo dyes. In Bacillus subtilis (strain 168), this protein is FMN reductase (NADPH) (nfrA1).